Here is a 157-residue protein sequence, read N- to C-terminus: Transcription elongation factor GreA (157 aa).

Positions 12-74 (LKKLEEELEY…TLEAMLKNAK (63 aa)) form a coiled coil.

This sequence belongs to the GreA/GreB family.

In terms of biological role, necessary for efficient RNA polymerase transcription elongation past template-encoded arresting sites. The arresting sites in DNA have the property of trapping a certain fraction of elongating RNA polymerases that pass through, resulting in locked ternary complexes. Cleavage of the nascent transcript by cleavage factors such as GreA or GreB allows the resumption of elongation from the new 3'terminus. GreA releases sequences of 2 to 3 nucleotides. The chain is Transcription elongation factor GreA from Caldanaerobacter subterraneus subsp. tengcongensis (strain DSM 15242 / JCM 11007 / NBRC 100824 / MB4) (Thermoanaerobacter tengcongensis).